Reading from the N-terminus, the 626-residue chain is Interferon-induced GTP-binding protein MxC (626 aa).

One can recognise a Dynamin-type G domain in the interval 40–313 (DLNLPAIAVI…LVEHIAKNVP (274 aa)). Residues 50-57 (GDQSSGKS) form a G1 motif region. Residue 50-57 (GDQSSGKS) coordinates GTP. Residues 75-77 (VTR) are G2 motif. A G3 motif region spans residues 151–154 (DLPG). GTP is bound by residues 151–155 (DLPGI) and 220–223 (TKPD). The G4 motif stretch occupies residues 220–223 (TKPD). The interval 252-255 (KCRG) is G5 motif. Residues 534–624 (LRETAFHLTS…ALPKVVHSAN (91 aa)) form the GED domain.

Belongs to the TRAFAC class dynamin-like GTPase superfamily. Dynamin/Fzo/YdjA family.

It is found in the cytoplasm. This chain is Interferon-induced GTP-binding protein MxC (mxc), found in Danio rerio (Zebrafish).